Consider the following 514-residue polypeptide: Histidine ammonia-lyase (514 aa).

Residues 143–145 constitute a cross-link (5-imidazolinone (Ala-Gly)); sequence ASG. Residue Ser144 is modified to 2,3-didehydroalanine (Ser).

It belongs to the PAL/histidase family. In terms of processing, contains an active site 4-methylidene-imidazol-5-one (MIO), which is formed autocatalytically by cyclization and dehydration of residues Ala-Ser-Gly.

The protein resides in the cytoplasm. The catalysed reaction is L-histidine = trans-urocanate + NH4(+). It functions in the pathway amino-acid degradation; L-histidine degradation into L-glutamate; N-formimidoyl-L-glutamate from L-histidine: step 1/3. This is Histidine ammonia-lyase from Photorhabdus laumondii subsp. laumondii (strain DSM 15139 / CIP 105565 / TT01) (Photorhabdus luminescens subsp. laumondii).